We begin with the raw amino-acid sequence, 142 residues long: Large ribosomal subunit protein uL11 (142 aa).

Belongs to the universal ribosomal protein uL11 family. As to quaternary structure, part of the ribosomal stalk of the 50S ribosomal subunit. Interacts with L10 and the large rRNA to form the base of the stalk. L10 forms an elongated spine to which L12 dimers bind in a sequential fashion forming a multimeric L10(L12)X complex. One or more lysine residues are methylated.

In terms of biological role, forms part of the ribosomal stalk which helps the ribosome interact with GTP-bound translation factors. This chain is Large ribosomal subunit protein uL11, found in Xanthomonas oryzae pv. oryzae (strain MAFF 311018).